Reading from the N-terminus, the 176-residue chain is ATP-dependent protease subunit HslV (176 aa).

Residue Thr2 is part of the active site. Residues Gly157, Cys160, and Thr163 each contribute to the Na(+) site.

It belongs to the peptidase T1B family. HslV subfamily. In terms of assembly, a double ring-shaped homohexamer of HslV is capped on each side by a ring-shaped HslU homohexamer. The assembly of the HslU/HslV complex is dependent on binding of ATP.

It is found in the cytoplasm. The catalysed reaction is ATP-dependent cleavage of peptide bonds with broad specificity.. Allosterically activated by HslU binding. Functionally, protease subunit of a proteasome-like degradation complex believed to be a general protein degrading machinery. This chain is ATP-dependent protease subunit HslV, found in Ectopseudomonas mendocina (strain ymp) (Pseudomonas mendocina).